The sequence spans 356 residues: (+)-(1(10)E,4E,6S,7R)-germacradien-6-ol synthase (356 aa).

Residues Asp-86 and Asp-91 each coordinate Mg(2+). The short motif at 86–91 is the DDXXXD motif element; it reads DDEYCD. Arg-181 is a binding site for substrate. Asn-227 and Ser-231 together coordinate Mg(2+). Residue Lys-234 coordinates substrate. Glu-235 is a binding site for Mg(2+). 314–315 is a binding site for substrate; it reads RY.

The protein belongs to the terpene synthase family. Requires Mg(2+) as cofactor.

The catalysed reaction is (2E,6E)-farnesyl diphosphate + H2O = (+)-(1(10)E,4E,6S,7R)-germacradien-6-ol + diphosphate. It participates in secondary metabolite biosynthesis; terpenoid biosynthesis. Its function is as follows. Catalyzes the conversion of (2E,6E)-farnesyl diphosphate (FPP) to yield the sesquiterpene (+)-(1(10)E,4E,6S,7R)-germacradien-6-ol via a putative 1,10-cyclization, which could require the abstraction of the pyrophosphate from FPP to yield the (E,E)-germacradienyl cation. The only accepted substrate is farnesyl diphosphate (FPP). The chain is (+)-(1(10)E,4E,6S,7R)-germacradien-6-ol synthase from Streptomyces pratensis (strain ATCC 33331 / IAF-45CD).